Consider the following 368-residue polypeptide: Germination protease (368 aa).

Positions 1-16 (MKNNELDVNQFLIRTD) are excised as a propeptide.

It belongs to the peptidase A25 family. In terms of assembly, homotetramer. Autoproteolytically processed. The inactive tetrameric zymogen termed p46 autoprocesses to a smaller form termed p41, which is active only during spore germination.

The catalysed reaction is Endopeptidase action with P4 Glu or Asp, P1 preferably Glu &gt; Asp, P1' hydrophobic and P2' Ala.. In terms of biological role, initiates the rapid degradation of small, acid-soluble proteins during spore germination. The polypeptide is Germination protease (Bacillus velezensis (strain DSM 23117 / BGSC 10A6 / LMG 26770 / FZB42) (Bacillus amyloliquefaciens subsp. plantarum)).